The following is a 569-amino-acid chain: MFLELKAQATSILKEAIRKAGFEVEDSELQFETSPHADLASRAAFRLAGIHRQNPKDLASRIVSAVEIPEGSFIGKVSAAGPYINFFAGKHYLNGTVNAVLKEKEKFGCGAPKDRILLEHTSANPNGPLHVGHIRNSIIGDTLARILRRAGYDVEVQYYVNDMGRQIAVVSWACERFELDLSRKSDSAIADVYIKANVELDKNPGYIKEIDALMEKVEAGDVRTIEHFDKAVSLAVAGIKETLLRLNVAHDKFVSESTFLKSGAVHDIVERIKATGRTKTDKGALVVDLSDYGFEKTLVIQRSNGTSLYTTRDLAYHEWKAGQADRIIDVFGADHKLISGQLRATLNAIGVKEPEVVIFEFVSLPEGSMSTRRGQFISADDLFDRVTGAAFEQVETRRPETSYEFKKQVAEAVGLGAVRYDIVRVSPEKSTVFNWKEALDFEKQGAPYIQYSHARACSILEKAKEEAAWNPDKEIDPSLLVEDSEIDLIKKMAMFDSVIDLGARELKPHVLAIYARELADAFNQFYRFVPVIAAEDENVRAARLALVDCARVVLANSLDTLGIIAPESM.

Residues 123 to 133 (ANPNGPLHVGH) carry the 'HIGH' region motif.

It belongs to the class-I aminoacyl-tRNA synthetase family.

The protein localises to the cytoplasm. It catalyses the reaction tRNA(Arg) + L-arginine + ATP = L-arginyl-tRNA(Arg) + AMP + diphosphate. This chain is Arginine--tRNA ligase, found in Methanosarcina mazei (strain ATCC BAA-159 / DSM 3647 / Goe1 / Go1 / JCM 11833 / OCM 88) (Methanosarcina frisia).